Consider the following 453-residue polypeptide: Bifunctional protein GlmU (453 aa).

Positions 1-225 (MNIVILAAGT…EWETLGVNSK (225 aa)) are pyrophosphorylase. UDP-N-acetyl-alpha-D-glucosamine is bound by residues 6–9 (LAAG), lysine 20, glutamine 71, 76–77 (GT), 98–100 (YGD), glycine 135, glutamate 150, asparagine 165, and asparagine 223. A Mg(2+)-binding site is contributed by aspartate 100. Asparagine 223 serves as a coordination point for Mg(2+). Residues 226-246 (AQLAELERIHQRKLAEALLAD) form a linker region. The interval 247–453 (GVTLADPARI…GYVRPVKKKS (207 aa)) is N-acetyltransferase. UDP-N-acetyl-alpha-D-glucosamine-binding residues include arginine 329 and lysine 347. Histidine 359 functions as the Proton acceptor in the catalytic mechanism. The UDP-N-acetyl-alpha-D-glucosamine site is built by tyrosine 362 and asparagine 373. Residues alanine 376, 382–383 (NY), serine 401, and alanine 419 contribute to the acetyl-CoA site.

It in the N-terminal section; belongs to the N-acetylglucosamine-1-phosphate uridyltransferase family. In the C-terminal section; belongs to the transferase hexapeptide repeat family. Homotrimer. The cofactor is Mg(2+).

It localises to the cytoplasm. It carries out the reaction alpha-D-glucosamine 1-phosphate + acetyl-CoA = N-acetyl-alpha-D-glucosamine 1-phosphate + CoA + H(+). It catalyses the reaction N-acetyl-alpha-D-glucosamine 1-phosphate + UTP + H(+) = UDP-N-acetyl-alpha-D-glucosamine + diphosphate. It functions in the pathway nucleotide-sugar biosynthesis; UDP-N-acetyl-alpha-D-glucosamine biosynthesis; N-acetyl-alpha-D-glucosamine 1-phosphate from alpha-D-glucosamine 6-phosphate (route II): step 2/2. Its pathway is nucleotide-sugar biosynthesis; UDP-N-acetyl-alpha-D-glucosamine biosynthesis; UDP-N-acetyl-alpha-D-glucosamine from N-acetyl-alpha-D-glucosamine 1-phosphate: step 1/1. It participates in bacterial outer membrane biogenesis; LPS lipid A biosynthesis. Its function is as follows. Catalyzes the last two sequential reactions in the de novo biosynthetic pathway for UDP-N-acetylglucosamine (UDP-GlcNAc). The C-terminal domain catalyzes the transfer of acetyl group from acetyl coenzyme A to glucosamine-1-phosphate (GlcN-1-P) to produce N-acetylglucosamine-1-phosphate (GlcNAc-1-P), which is converted into UDP-GlcNAc by the transfer of uridine 5-monophosphate (from uridine 5-triphosphate), a reaction catalyzed by the N-terminal domain. In Burkholderia thailandensis (strain ATCC 700388 / DSM 13276 / CCUG 48851 / CIP 106301 / E264), this protein is Bifunctional protein GlmU.